A 901-amino-acid polypeptide reads, in one-letter code: Modifier of cell death (901 aa).

2 disordered regions span residues 147 to 169 (AQKR…PRAA) and 218 to 245 (PRKS…SPSP). The C2H2-type zinc-finger motif lies at 259-282 (FKCAECGDGFPVMDRLCDHMIKQH). Disordered regions lie at residues 494 to 528 (KKEH…DDVP), 682 to 717 (QERV…SHEE), and 779 to 901 (HKAI…WDDN). Positions 817-828 (EAAAKLIQAENE) are enriched in low complexity. Residues 829 to 840 (MVVEEEEVEEPP) are compositionally biased toward acidic residues. Positions 846 to 866 (QVPKEKEVEVAEAEKLPEQVK) are enriched in basic and acidic residues.

Promotes programmed cell death. Its role in programmed cell death may be in conjunction with cell cycle regulatory factor efl-1 and the synthetic multivulva class B proteins dpl-1 and lin-35, and is independent of the ced-1, ced-8 and ced-9 pathways. This chain is Modifier of cell death, found in Caenorhabditis elegans.